The chain runs to 210 residues: Ras-related protein SEC4 (210 aa).

21–28 is a GTP binding site; that stretch reads GDSGVGKS. The Effector region signature appears at 43-51; it reads FITTIGIDF. Residues 69–73 and 127–130 contribute to the GTP site; these read DTAGQ and NKCD. Residues Cys-209 and Cys-210 are each lipidated (S-geranylgeranyl cysteine).

This sequence belongs to the small GTPase superfamily. Rab family.

The protein localises to the cytoplasmic vesicle. Its subcellular location is the secretory vesicle membrane. It is found in the cell membrane. In terms of biological role, involved in exocytosis. Maybe by regulating the binding and fusion of secretory vesicles with the cell surface. The GTP-bound form of SEC4 may interact with an effector, thereby stimulating its activity and leading to exocytotic fusion. SEC4 may be an upstream activator of the 19.5S SEC8/SEC15 particle. SEC4 probably interacts directly with SEC8; it could serve as the attachment site for the SEC8/SEC15 particle. This Candida albicans (strain SC5314 / ATCC MYA-2876) (Yeast) protein is Ras-related protein SEC4 (SEC4).